Reading from the N-terminus, the 530-residue chain is Glutamate--cysteine ligase (530 aa).

This sequence belongs to the glutamate--cysteine ligase type 1 family. Type 1 subfamily.

It carries out the reaction L-cysteine + L-glutamate + ATP = gamma-L-glutamyl-L-cysteine + ADP + phosphate + H(+). The protein operates within sulfur metabolism; glutathione biosynthesis; glutathione from L-cysteine and L-glutamate: step 1/2. The sequence is that of Glutamate--cysteine ligase from Saccharophagus degradans (strain 2-40 / ATCC 43961 / DSM 17024).